Reading from the N-terminus, the 132-residue chain is Large ribosomal subunit protein uL14 (132 aa).

The protein belongs to the universal ribosomal protein uL14 family. In terms of assembly, part of the 50S ribosomal subunit. Forms a cluster with proteins L3 and L24e, part of which may contact the 16S rRNA in 2 intersubunit bridges.

In terms of biological role, binds to 23S rRNA. Forms part of two intersubunit bridges in the 70S ribosome. In Methanococcus maripaludis (strain DSM 14266 / JCM 13030 / NBRC 101832 / S2 / LL), this protein is Large ribosomal subunit protein uL14.